Here is a 221-residue protein sequence, read N- to C-terminus: Protein FixW (221 aa).

Residues 5–156 (LNLGSPAPPI…LPKVIDGNWR (152 aa)) enclose the Thioredoxin domain. C43 and C46 are joined by a disulfide.

The protein belongs to the thioredoxin family.

The chain is Protein FixW (fixW) from Rhizobium leguminosarum.